Reading from the N-terminus, the 329-residue chain is 4-hydroxythreonine-4-phosphate dehydrogenase (329 aa).

Positions 136 and 137 each coordinate substrate. 3 residues coordinate a divalent metal cation: H166, H211, and H266. Substrate-binding residues include K274, N283, and R292.

The protein belongs to the PdxA family. In terms of assembly, homodimer. Zn(2+) serves as cofactor. Requires Mg(2+) as cofactor. The cofactor is Co(2+).

Its subcellular location is the cytoplasm. The catalysed reaction is 4-(phosphooxy)-L-threonine + NAD(+) = 3-amino-2-oxopropyl phosphate + CO2 + NADH. Its pathway is cofactor biosynthesis; pyridoxine 5'-phosphate biosynthesis; pyridoxine 5'-phosphate from D-erythrose 4-phosphate: step 4/5. Catalyzes the NAD(P)-dependent oxidation of 4-(phosphooxy)-L-threonine (HTP) into 2-amino-3-oxo-4-(phosphooxy)butyric acid which spontaneously decarboxylates to form 3-amino-2-oxopropyl phosphate (AHAP). The sequence is that of 4-hydroxythreonine-4-phosphate dehydrogenase from Escherichia coli (strain 55989 / EAEC).